The primary structure comprises 93 residues: Small ribosomal subunit protein uS17 (93 aa).

This sequence belongs to the universal ribosomal protein uS17 family. Part of the 30S ribosomal subunit.

In terms of biological role, one of the primary rRNA binding proteins, it binds specifically to the 5'-end of 16S ribosomal RNA. The chain is Small ribosomal subunit protein uS17 from Rhodococcus erythropolis (strain PR4 / NBRC 100887).